The chain runs to 841 residues: Protein translocase subunit SecA (841 aa).

Residues Gln-85, 103-107 (GEGKT), and Asp-492 contribute to the ATP site. Positions 786 to 812 (REEVVQGQTTAHQPQDGDEAKQAKKAP) are disordered. Cys-825, Cys-827, Cys-836, and Cys-837 together coordinate Zn(2+).

It belongs to the SecA family. Monomer and homodimer. Part of the essential Sec protein translocation apparatus which comprises SecA, SecYEG and auxiliary proteins SecDF. Other proteins may also be involved. It depends on Zn(2+) as a cofactor.

The protein resides in the cell membrane. The protein localises to the cytoplasm. The enzyme catalyses ATP + H2O + cellular proteinSide 1 = ADP + phosphate + cellular proteinSide 2.. Its function is as follows. Part of the Sec protein translocase complex. Interacts with the SecYEG preprotein conducting channel. Has a central role in coupling the hydrolysis of ATP to the transfer of proteins into and across the cell membrane, serving as an ATP-driven molecular motor driving the stepwise translocation of polypeptide chains across the membrane. This is Protein translocase subunit SecA from Bacillus velezensis (strain DSM 23117 / BGSC 10A6 / LMG 26770 / FZB42) (Bacillus amyloliquefaciens subsp. plantarum).